We begin with the raw amino-acid sequence, 125 residues long: MSNLLKEFNEQQIKLLSNREIPKFKSGDTLRVTMKIFDSAGERIQTFEGVCIKRRNNGLHSSFTLRKISYNESIQLQVFLYSPTIESIEVVKFGKVRRAKLYYMLSLFGKSARIKERIDRSKKSS.

The protein belongs to the bacterial ribosomal protein bL19 family.

In terms of biological role, this protein is located at the 30S-50S ribosomal subunit interface and may play a role in the structure and function of the aminoacyl-tRNA binding site. This Ehrlichia ruminantium (strain Welgevonden) protein is Large ribosomal subunit protein bL19.